The chain runs to 532 residues: Carboxypeptidase Y (532 aa).

Residues 1–20 (MKAFTSLLCGLGLSTTLAKA) form the signal peptide. Residues 21 to 111 (ISLQRPLGLD…AIENYQLRVN (91 aa)) constitute a propeptide, mediates translocation across the endoplasmic reticulum, renders the enzyme inactive during transit, and targets the molecule to the vacuole. A Vacuolar targeting signal motif is present at residues 24–27 (QRPL). 2 N-linked (GlcNAc...) (high mannose) asparagine glycosylation sites follow: Asn124 and Asn198. Cystine bridges form between Cys167-Cys409, Cys304-Cys318, Cys328-Cys351, Cys335-Cys344, and Cys373-Cys379. Ser257 is a catalytic residue. The N-linked (GlcNAc...) (high mannose) asparagine glycan is linked to Asn279. Asp449 is an active-site residue. Cys452 is a substrate binding site. Residue Asn479 is glycosylated (N-linked (GlcNAc...) (high mannose) asparagine). The active site involves His508. A substrate-binding site is contributed by Met509.

This sequence belongs to the peptidase S10 family. Post-translationally, enters the endoplasmic reticulum as an inactive zymogen and is modified by four N-linked core oligosaccharides, giving rise to a precursor known as P1 (67 kDa). As P1 transits through the Golgi, extension of its core oligosaccharides leads to the Golgi-modified P2 precursor (69 kDa). P2 is sorted away from secretory proteins at or beyond a late Golgi compartment and is subsequently delivered to the vacuole via a prevacuolar endosome-like compartment. Upon arrival in the vacuole, the N-terminal prosegment of P2 is cleaved by vacuolar proteases to yield the enzymatically active mature vacuolar form of CPY (61 kDa). The four high mannose core N-glycans found in mature CPY are Man(11-15)GlcNAc(2) at Asn-124, Man(8-12)GlcNAc(2) at Asn-198, Man(9-14)GlcNAc(2) at Asn-279 and phosphorylated Man(12-17)GlcNAc(2) as well as Man(11-16)GlcNAc(2) at Asn-479.

The protein localises to the vacuole lumen. It carries out the reaction Release of a C-terminal amino acid with broad specificity.. Its activity is regulated as follows. Inhibited by ZPCK. Its function is as follows. Vacuolar serine-type carboxypeptidase involved in degradation of small peptides. Digests preferentially peptides containing an aliphatic or hydrophobic residue in P1' position, as well as methionine, leucine or phenylalanine in P1 position of ester substrate. Also plays a role in breakdown of the autophagic body and the autophagosome-dependent protein synthesis. Plays a key role in phytochelatin (PC) synthesis from glutathione (GSH) by cleaving the Gly from GSH and form the PC-peptides of the structure (gamma-Glu-Cys)2-Gly. Also involved in resistance to xenobiotics via the degradation of glutathione-S-conjugates. This chain is Carboxypeptidase Y, found in Saccharomyces cerevisiae (strain ATCC 204508 / S288c) (Baker's yeast).